A 512-amino-acid chain; its full sequence is Serine/threonine-protein kinase grp (512 aa).

Residues 22–279 (WTLAQTLGEG…LEKTLDHKWC (258 aa)) form the Protein kinase domain. ATP is bound by residues 28-36 (LGEGAYGEV) and Lys-51. The Proton acceptor role is filled by Asp-143. Positions 335–360 (PTMRSDDDFNVRLGSGRSKEDGGDRQ) are disordered.

This sequence belongs to the protein kinase superfamily. CAMK Ser/Thr protein kinase family. NIM1 subfamily. Phosphorylated in a MEI-41/ATR dependent manner in response to DNA damage or the presence of unreplicated DNA.

The protein resides in the nucleus. The enzyme catalyses L-seryl-[protein] + ATP = O-phospho-L-seryl-[protein] + ADP + H(+). The catalysed reaction is L-threonyl-[protein] + ATP = O-phospho-L-threonyl-[protein] + ADP + H(+). Its function is as follows. Serine/threonine-protein kinase which is required for checkpoint-mediated cell cycle arrest and activation of DNA repair in response to the presence of DNA damage or unreplicated DNA. May also negatively regulate cell cycle progression during unperturbed cell cycles. May phosphorylate the CDC25 phosphatase stg, which promotes its degradation. This results in increased inhibitory tyrosine phosphorylation of Cdk1-cyclin complexes and consequent inhibition of cell cycle progression. The sequence is that of Serine/threonine-protein kinase grp from Drosophila melanogaster (Fruit fly).